The chain runs to 256 residues: Stanniocalcin (256 aa).

An N-terminal signal peptide occupies residues 1-18; that stretch reads MLAKFGLCAVFLVLGTAA. Positions 19-33 are excised as a propeptide; sequence TFDTDPEEASPRRAR. N62 carries an N-linked (GlcNAc...) asparagine glycan. Residues 204 to 241 are disordered; that stretch reads QGSNQGPNSAPAGWRWPMGSPPSFKIQPSMRGRDPTHL.

This sequence belongs to the stanniocalcin family. As to quaternary structure, homodimer; disulfide-linked. Produced and secreted by the corpuscles of Stannius.

It is found in the secreted. In terms of biological role, its primary function is the prevention of hypercalcemia. Upon release into the circulation, it lowers calcium transport by the gills, thereby reducing its rate of influx from the environment into the extracellular compartment. STC also stimulates phosphate reabsorption by renal proximal tubules. The consequence of this action is increased levels of plasma phosphate, which combines with excess calcium and promotes its disposal into bone and scales. This chain is Stanniocalcin (stc), found in Oncorhynchus mykiss (Rainbow trout).